A 172-amino-acid polypeptide reads, in one-letter code: Fimbrial-like protein FimF (172 aa).

Positions 1–21 (MILRRVFIAIGCVLFSPLSQA) are cleaved as a signal peptide. Cys-41 and Cys-81 form a disulfide bridge.

The protein belongs to the fimbrial protein family.

It localises to the fimbrium. This is Fimbrial-like protein FimF (fimF) from Salmonella typhimurium (strain LT2 / SGSC1412 / ATCC 700720).